A 226-amino-acid polypeptide reads, in one-letter code: 6-carboxyhexanoate--CoA ligase (226 aa).

It belongs to the BioW family. Homodimer. The cofactor is Mg(2+).

It catalyses the reaction heptanedioate + ATP + CoA = 6-carboxyhexanoyl-CoA + AMP + diphosphate. It functions in the pathway metabolic intermediate metabolism; pimeloyl-CoA biosynthesis; pimeloyl-CoA from pimelate: step 1/1. Its function is as follows. Catalyzes the transformation of pimelate into pimeloyl-CoA with concomitant hydrolysis of ATP to AMP. This is 6-carboxyhexanoate--CoA ligase from Methanocaldococcus infernus (strain DSM 11812 / JCM 15783 / ME).